We begin with the raw amino-acid sequence, 285 residues long: Glycine--tRNA ligase alpha subunit (285 aa).

Belongs to the class-II aminoacyl-tRNA synthetase family. In terms of assembly, tetramer of two alpha and two beta subunits.

It is found in the cytoplasm. The catalysed reaction is tRNA(Gly) + glycine + ATP = glycyl-tRNA(Gly) + AMP + diphosphate. This Granulibacter bethesdensis (strain ATCC BAA-1260 / CGDNIH1) protein is Glycine--tRNA ligase alpha subunit.